The sequence spans 407 residues: Phosphoglycerate kinase (407 aa).

Substrate contacts are provided by residues 24–26 (DIN), Arg39, 60–63 (HQSR), Arg117, and Arg157. Residues Glu330 and 355–358 (GGHI) contribute to the ATP site.

The protein belongs to the phosphoglycerate kinase family.

The protein localises to the cytoplasm. The catalysed reaction is (2R)-3-phosphoglycerate + ATP = (2R)-3-phospho-glyceroyl phosphate + ADP. The protein operates within carbohydrate degradation; glycolysis; pyruvate from D-glyceraldehyde 3-phosphate: step 2/5. This Archaeoglobus fulgidus (strain ATCC 49558 / DSM 4304 / JCM 9628 / NBRC 100126 / VC-16) protein is Phosphoglycerate kinase (pgk).